A 492-amino-acid polypeptide reads, in one-letter code: Adenosylhomocysteinase (492 aa).

Residues T68, D153, and E215 each contribute to the substrate site. 216 to 218 is a binding site for NAD(+); the sequence is TTT. K245 and D249 together coordinate substrate. NAD(+) contacts are provided by residues N250, 279 to 284, E302, N337, 358 to 360, and N406; these read GYGDVG and IGH.

It belongs to the adenosylhomocysteinase family. NAD(+) is required as a cofactor.

Its subcellular location is the cytoplasm. The catalysed reaction is S-adenosyl-L-homocysteine + H2O = L-homocysteine + adenosine. Its pathway is amino-acid biosynthesis; L-homocysteine biosynthesis; L-homocysteine from S-adenosyl-L-homocysteine: step 1/1. Functionally, may play a key role in the regulation of the intracellular concentration of adenosylhomocysteine. The polypeptide is Adenosylhomocysteinase (Mycobacterium marinum (strain ATCC BAA-535 / M)).